Consider the following 313-residue polypeptide: Ribosomal RNA small subunit methyltransferase I (313 aa).

A disordered region spans residues 1–23 (MASIQLARTTRGGDGVARADGTR).

It belongs to the methyltransferase superfamily. RsmI family.

It is found in the cytoplasm. The catalysed reaction is cytidine(1402) in 16S rRNA + S-adenosyl-L-methionine = 2'-O-methylcytidine(1402) in 16S rRNA + S-adenosyl-L-homocysteine + H(+). Catalyzes the 2'-O-methylation of the ribose of cytidine 1402 (C1402) in 16S rRNA. The polypeptide is Ribosomal RNA small subunit methyltransferase I (Micromonospora olivasterospora).